A 203-amino-acid chain; its full sequence is Pyridoxal 5'-phosphate synthase subunit PdxT (203 aa).

L-glutamine is bound at residue 51-53 (GES). The active-site Nucleophile is C83. L-glutamine-binding positions include R110 and 137–138 (IR). Active-site charge relay system residues include H172 and E174.

It belongs to the glutaminase PdxT/SNO family. In terms of assembly, in the presence of PdxS, forms a dodecamer of heterodimers. Only shows activity in the heterodimer.

It catalyses the reaction aldehydo-D-ribose 5-phosphate + D-glyceraldehyde 3-phosphate + L-glutamine = pyridoxal 5'-phosphate + L-glutamate + phosphate + 3 H2O + H(+). The catalysed reaction is L-glutamine + H2O = L-glutamate + NH4(+). The protein operates within cofactor biosynthesis; pyridoxal 5'-phosphate biosynthesis. Functionally, catalyzes the hydrolysis of glutamine to glutamate and ammonia as part of the biosynthesis of pyridoxal 5'-phosphate. The resulting ammonia molecule is channeled to the active site of PdxS. This Thermoplasma acidophilum (strain ATCC 25905 / DSM 1728 / JCM 9062 / NBRC 15155 / AMRC-C165) protein is Pyridoxal 5'-phosphate synthase subunit PdxT.